The primary structure comprises 147 residues: Hemoglobin subunit epsilon (147 aa).

The 145-residue stretch at 3–147 folds into the Globin domain; it reads HLTAEEKSSV…VATALAHKYH (145 aa). 2 positions are modified to phosphoserine: Ser14 and Ser51. Heme b is bound by residues His64 and His93.

This sequence belongs to the globin family. Heterotetramer of two alpha chains and two epsilon chains in early embryonic hemoglobin Gower-2; two zeta chains and two epsilon chains in early embryonic hemoglobin Gower-1. As to expression, red blood cells.

Its function is as follows. The epsilon chain is a beta-type chain of early mammalian embryonic hemoglobin. This is Hemoglobin subunit epsilon (HBE1) from Carlito syrichta (Philippine tarsier).